The following is a 377-amino-acid chain: Lipoyl synthase, mitochondrial (377 aa).

Residues 1 to 77 (MFRRGGRILN…LPNGSVHKRL (77 aa)) constitute a mitochondrion transit peptide. Residues cysteine 107, cysteine 112, cysteine 118, cysteine 138, cysteine 142, cysteine 145, and serine 353 each coordinate [4Fe-4S] cluster. The Radical SAM core domain maps to 123-342 (DKTRATATIM…RKRAEELGFL (220 aa)).

The protein belongs to the radical SAM superfamily. Lipoyl synthase family. [4Fe-4S] cluster serves as cofactor.

The protein localises to the mitochondrion. It catalyses the reaction [[Fe-S] cluster scaffold protein carrying a second [4Fe-4S](2+) cluster] + N(6)-octanoyl-L-lysyl-[protein] + 2 oxidized [2Fe-2S]-[ferredoxin] + 2 S-adenosyl-L-methionine + 4 H(+) = [[Fe-S] cluster scaffold protein] + N(6)-[(R)-dihydrolipoyl]-L-lysyl-[protein] + 4 Fe(3+) + 2 hydrogen sulfide + 2 5'-deoxyadenosine + 2 L-methionine + 2 reduced [2Fe-2S]-[ferredoxin]. It functions in the pathway protein modification; protein lipoylation via endogenous pathway; protein N(6)-(lipoyl)lysine from octanoyl-[acyl-carrier-protein]: step 2/2. Functionally, catalyzes the radical-mediated insertion of two sulfur atoms into the C-6 and C-8 positions of the octanoyl moiety bound to the lipoyl domains of lipoate-dependent enzymes, thereby converting the octanoylated domains into lipoylated derivatives. The polypeptide is Lipoyl synthase, mitochondrial (Schizosaccharomyces japonicus (strain yFS275 / FY16936) (Fission yeast)).